The chain runs to 123 residues: Beta-2-microglobulin (123 aa).

An N-terminal signal peptide occupies residues M1–A21. The Ig-like C1-type domain occupies P29–K118. Cysteines 49 and 104 form a disulfide.

Belongs to the beta-2-microglobulin family. As to quaternary structure, heterodimer of an alpha chain and a beta chain. Beta-2-microglobulin is the beta-chain of major histocompatibility complex class I molecules.

It localises to the secreted. In terms of biological role, component of the class I major histocompatibility complex (MHC). Involved in the presentation of peptide antigens to the immune system. In Monodelphis domestica (Gray short-tailed opossum), this protein is Beta-2-microglobulin (B2M).